The chain runs to 185 residues: Intraflagellar transport protein 22 homolog (185 aa).

GTP is bound by residues 10–17, 63–67, and 123–126; these read GPCESGKT, DCGGD, and HKPG.

This sequence belongs to the small GTPase superfamily. Rab family. In terms of assembly, component of the IFT complex B, at least composed of IFT20, IFT22, IFT25, IFT27, IFT46, IFT52, TRAF3IP1/IFT54, IFT57, IFT74, IFT80, IFT81, and IFT88. Interacts with IFT88. Interacts with CFAP61.

It localises to the cell projection. The protein localises to the cilium. Functionally, small GTPase-like component of the intraflagellar transport (IFT) complex B. The chain is Intraflagellar transport protein 22 homolog (IFT22) from Bos taurus (Bovine).